The following is a 50-amino-acid chain: Light-harvesting protein B-880 alpha chain (50 aa).

Over 1 to 12 the chain is Cytoplasmic; it reads MYKLWLLFDPRR. A helical transmembrane segment spans residues 13 to 33; sequence ALVALSAFLFVLALIIHFIAL. H29 contacts a bacteriochlorophyll. Topologically, residues 34–50 are periplasmic; the sequence is STDRFNWLEGKPAVKAA.

It belongs to the antenna complex alpha subunit family. The core complex is formed by different alpha and beta chains, binding bacteriochlorophyll molecules, and arranged most probably in tetrameric structures disposed around the reaction center. The non-pigmented gamma chains may constitute additional components.

The protein localises to the cell inner membrane. Its function is as follows. Antenna complexes are light-harvesting systems, which transfer the excitation energy to the reaction centers. The polypeptide is Light-harvesting protein B-880 alpha chain (Rhodoblastus acidophilus (Rhodopseudomonas acidophila)).